A 155-amino-acid polypeptide reads, in one-letter code: Small ribosomal subunit protein uS7c (155 aa).

The protein belongs to the universal ribosomal protein uS7 family. Part of the 30S ribosomal subunit.

The protein localises to the plastid. The protein resides in the chloroplast. In terms of biological role, one of the primary rRNA binding proteins, it binds directly to 16S rRNA where it nucleates assembly of the head domain of the 30S subunit. In Metasequoia glyptostroboides (Dawn redwood), this protein is Small ribosomal subunit protein uS7c (rps7).